The sequence spans 391 residues: Thyroid hormone receptor alpha-B (391 aa).

The segment at 1–32 (MAQWPEKEEEEQPMFGEEYTGYIPSYLEKDEP) is modulating. 2 NR C4-type zinc fingers span residues 33–53 (CVVCGDKATGYHYRCITCEGC) and 71–95 (CKYDCCCIIDKITRNQCQLCRFKKC). The nuclear receptor DNA-binding region spans 33-100 (CVVCGDKATG…RFKKCIAVGM (68 aa)). The NR LBD domain occupies 143-388 (AEWELIRMVT…PPLFLEVFED (246 aa)).

The protein belongs to the nuclear hormone receptor family. NR1 subfamily.

Its subcellular location is the nucleus. Its function is as follows. High affinity receptor for triiodothyronine. This chain is Thyroid hormone receptor alpha-B (thra2), found in Paralichthys olivaceus (Bastard halibut).